The primary structure comprises 747 residues: Kinesin-like protein KIF3B (747 aa).

M1 bears the N-acetylmethionine mark. S2 is subject to N-acetylserine; in Kinesin-like protein KIF3B, N-terminally processed. One can recognise a Kinesin motor domain in the interval S9 to I340. G96–T103 is an ATP binding site. A coiled-coil region spans residues V346 to E579. Disordered stretches follow at residues I374–D412 and Q699–K747. The span at G393–D411 shows a compositional bias: acidic residues. The interval L580–K747 is globular. The segment covering D701–N710 has biased composition (polar residues). The segment covering K711–R721 has biased composition (basic residues). A compositionally biased stretch (low complexity) spans K722–S735.

The protein belongs to the TRAFAC class myosin-kinesin ATPase superfamily. Kinesin family. Kinesin II subfamily. Heterodimer of KIF3A and KIF3B. KIF3A/KIF3B heterodimer interacts with KIFAP3 forming a heterotrimeric (KIF3A/KIF3B/KIFAP3) complex. Interacts directly with IFT20. Interacts with the SMC3 subunit of the cohesin complex. Interacts with FLCN.

It localises to the cytoplasm. Its subcellular location is the cytoskeleton. The protein localises to the cell projection. The protein resides in the cilium. It is found in the dendritic spine. Its function is as follows. Microtubule-based molecular motor that transport intracellular cargos, such as vesicles, organelles and protein complexes. Uses ATP hydrolysis to generate force to bind and move along the microtubule. Plays a role in cilia formation. Involved in photoreceptor integrity and opsin trafficking in rod photoreceptors. Transports vesicles containing N-methyl-D-aspartate (NMDA) receptor subunit GRIN2A into neuronal dendrites. This chain is Kinesin-like protein KIF3B (KIF3B), found in Homo sapiens (Human).